The chain runs to 189 residues: Large ribosomal subunit protein bL9 (189 aa).

It belongs to the bacterial ribosomal protein bL9 family.

In terms of biological role, binds to the 23S rRNA. In Brucella canis (strain ATCC 23365 / NCTC 10854 / RM-666), this protein is Large ribosomal subunit protein bL9.